The sequence spans 245 residues: 1-(5-phosphoribosyl)-5-[(5-phosphoribosylamino)methylideneamino] imidazole-4-carboxamide isomerase (245 aa).

Residue D8 is the Proton acceptor of the active site. D129 functions as the Proton donor in the catalytic mechanism.

This sequence belongs to the HisA/HisF family.

It is found in the cytoplasm. It catalyses the reaction 1-(5-phospho-beta-D-ribosyl)-5-[(5-phospho-beta-D-ribosylamino)methylideneamino]imidazole-4-carboxamide = 5-[(5-phospho-1-deoxy-D-ribulos-1-ylimino)methylamino]-1-(5-phospho-beta-D-ribosyl)imidazole-4-carboxamide. It participates in amino-acid biosynthesis; L-histidine biosynthesis; L-histidine from 5-phospho-alpha-D-ribose 1-diphosphate: step 4/9. The chain is 1-(5-phosphoribosyl)-5-[(5-phosphoribosylamino)methylideneamino] imidazole-4-carboxamide isomerase from Rhodopseudomonas palustris (strain BisA53).